A 94-amino-acid polypeptide reads, in one-letter code: Aspartyl/glutamyl-tRNA(Asn/Gln) amidotransferase subunit C (94 aa).

The protein belongs to the GatC family. As to quaternary structure, heterotrimer of A, B and C subunits.

The enzyme catalyses L-glutamyl-tRNA(Gln) + L-glutamine + ATP + H2O = L-glutaminyl-tRNA(Gln) + L-glutamate + ADP + phosphate + H(+). It carries out the reaction L-aspartyl-tRNA(Asn) + L-glutamine + ATP + H2O = L-asparaginyl-tRNA(Asn) + L-glutamate + ADP + phosphate + 2 H(+). In terms of biological role, allows the formation of correctly charged Asn-tRNA(Asn) or Gln-tRNA(Gln) through the transamidation of misacylated Asp-tRNA(Asn) or Glu-tRNA(Gln) in organisms which lack either or both of asparaginyl-tRNA or glutaminyl-tRNA synthetases. The reaction takes place in the presence of glutamine and ATP through an activated phospho-Asp-tRNA(Asn) or phospho-Glu-tRNA(Gln). This is Aspartyl/glutamyl-tRNA(Asn/Gln) amidotransferase subunit C from Solidesulfovibrio magneticus (strain ATCC 700980 / DSM 13731 / RS-1) (Desulfovibrio magneticus).